The chain runs to 415 residues: Tyrosine--tRNA ligase (415 aa).

Residue Tyr34 participates in L-tyrosine binding. The 'HIGH' region signature appears at 39–48; it reads PTADSLHLGH. L-tyrosine is bound by residues Tyr164 and Gln168. The 'KMSKS' region motif lies at 226-230; sequence KFGKS. Residue Lys229 participates in ATP binding. The S4 RNA-binding domain occupies 348–415; the sequence is KNVVDFLVDG…KKKYFLGKVK (68 aa).

It belongs to the class-I aminoacyl-tRNA synthetase family. TyrS type 1 subfamily. Homodimer.

It is found in the cytoplasm. It carries out the reaction tRNA(Tyr) + L-tyrosine + ATP = L-tyrosyl-tRNA(Tyr) + AMP + diphosphate + H(+). Catalyzes the attachment of tyrosine to tRNA(Tyr) in a two-step reaction: tyrosine is first activated by ATP to form Tyr-AMP and then transferred to the acceptor end of tRNA(Tyr). The polypeptide is Tyrosine--tRNA ligase (Leuconostoc mesenteroides subsp. mesenteroides (strain ATCC 8293 / DSM 20343 / BCRC 11652 / CCM 1803 / JCM 6124 / NCDO 523 / NBRC 100496 / NCIMB 8023 / NCTC 12954 / NRRL B-1118 / 37Y)).